A 122-amino-acid polypeptide reads, in one-letter code: Large ribosomal subunit protein uL14 (122 aa).

The protein belongs to the universal ribosomal protein uL14 family. In terms of assembly, part of the 50S ribosomal subunit. Forms a cluster with proteins L3 and L19. In the 70S ribosome, L14 and L19 interact and together make contacts with the 16S rRNA in bridges B5 and B8.

In terms of biological role, binds to 23S rRNA. Forms part of two intersubunit bridges in the 70S ribosome. The sequence is that of Large ribosomal subunit protein uL14 from Mycobacteroides abscessus (strain ATCC 19977 / DSM 44196 / CCUG 20993 / CIP 104536 / JCM 13569 / NCTC 13031 / TMC 1543 / L948) (Mycobacterium abscessus).